The sequence spans 155 residues: Aspartate 1-decarboxylase (155 aa).

Ser-24 acts as the Schiff-base intermediate with substrate; via pyruvic acid in catalysis. The residue at position 24 (Ser-24) is a Pyruvic acid (Ser). Thr-56 lines the substrate pocket. The active-site Proton donor is the Tyr-57. Residue 72-74 (GAA) coordinates substrate.

It belongs to the PanD family. Heterooctamer of four alpha and four beta subunits. Pyruvate is required as a cofactor. Is synthesized initially as an inactive proenzyme, which is activated by self-cleavage at a specific serine bond to produce a beta-subunit with a hydroxyl group at its C-terminus and an alpha-subunit with a pyruvoyl group at its N-terminus.

The protein localises to the cytoplasm. The enzyme catalyses L-aspartate + H(+) = beta-alanine + CO2. It functions in the pathway cofactor biosynthesis; (R)-pantothenate biosynthesis; beta-alanine from L-aspartate: step 1/1. Catalyzes the pyruvoyl-dependent decarboxylation of aspartate to produce beta-alanine. In Methylocella silvestris (strain DSM 15510 / CIP 108128 / LMG 27833 / NCIMB 13906 / BL2), this protein is Aspartate 1-decarboxylase.